Here is a 71-residue protein sequence, read N- to C-terminus: MGAQLSGGRGAPEPAQTQPQPQPQPAAPEGPEQPRHPPQPQPQPQPQPQPEPSPWGPLDDVRFLIACTSWY.

Gly residues predominate over residues 1-10 (MGAQLSGGRG). The interval 1 to 61 (MGAQLSGGRG…PSPWGPLDDV (61 aa)) is disordered. Positions 36-55 (HPPQPQPQPQPQPQPEPSPW) are enriched in pro residues.

This is Protein MMP24OS from Homo sapiens (Human).